Here is a 295-residue protein sequence, read N- to C-terminus: Phosphatidylserine decarboxylase proenzyme (295 aa).

Active-site charge relay system; for autoendoproteolytic cleavage activity residues include Asp113, His169, and Ser256. Ser256 acts as the Schiff-base intermediate with substrate; via pyruvic acid; for decarboxylase activity in catalysis. Ser256 is subject to Pyruvic acid (Ser); by autocatalysis.

The protein belongs to the phosphatidylserine decarboxylase family. PSD-B subfamily. Prokaryotic type II sub-subfamily. Heterodimer of a large membrane-associated beta subunit and a small pyruvoyl-containing alpha subunit. Pyruvate is required as a cofactor. In terms of processing, is synthesized initially as an inactive proenzyme. Formation of the active enzyme involves a self-maturation process in which the active site pyruvoyl group is generated from an internal serine residue via an autocatalytic post-translational modification. Two non-identical subunits are generated from the proenzyme in this reaction, and the pyruvate is formed at the N-terminus of the alpha chain, which is derived from the carboxyl end of the proenzyme. The autoendoproteolytic cleavage occurs by a canonical serine protease mechanism, in which the side chain hydroxyl group of the serine supplies its oxygen atom to form the C-terminus of the beta chain, while the remainder of the serine residue undergoes an oxidative deamination to produce ammonia and the pyruvoyl prosthetic group on the alpha chain. During this reaction, the Ser that is part of the protease active site of the proenzyme becomes the pyruvoyl prosthetic group, which constitutes an essential element of the active site of the mature decarboxylase.

Its subcellular location is the cell membrane. The catalysed reaction is a 1,2-diacyl-sn-glycero-3-phospho-L-serine + H(+) = a 1,2-diacyl-sn-glycero-3-phosphoethanolamine + CO2. It functions in the pathway phospholipid metabolism; phosphatidylethanolamine biosynthesis; phosphatidylethanolamine from CDP-diacylglycerol: step 2/2. In terms of biological role, catalyzes the formation of phosphatidylethanolamine (PtdEtn) from phosphatidylserine (PtdSer). This is Phosphatidylserine decarboxylase proenzyme from Clostridium botulinum (strain Kyoto / Type A2).